A 150-amino-acid polypeptide reads, in one-letter code: UPF0506 protein SJCHGC03144 (150 aa).

The first 18 residues, 1–18 (MNTCIQLLILCLVTVINS), serve as a signal peptide directing secretion. N-linked (GlcNAc...) asparagine glycans are attached at residues Asn-20, Asn-36, Asn-52, and Asn-110. 3 cysteine pairs are disulfide-bonded: Cys-116/Cys-130, Cys-123/Cys-134, and Cys-129/Cys-139.

Belongs to the UPF0506 family.

The protein resides in the secreted. In Schistosoma japonicum (Blood fluke), this protein is UPF0506 protein SJCHGC03144.